Reading from the N-terminus, the 77-residue chain is MVFEKVKDIIADQLGIDATEIKMESSFIDDLGADSLDIVELIMALEEEFDIEMPDEEAEKVSSVGDVVNYIKAHTEE.

One can recognise a Carrier domain in the interval 1 to 75; the sequence is MVFEKVKDII…DVVNYIKAHT (75 aa). Ser-35 is modified (O-(pantetheine 4'-phosphoryl)serine).

This sequence belongs to the acyl carrier protein (ACP) family. 4'-phosphopantetheine is transferred from CoA to a specific serine of apo-ACP by AcpS. This modification is essential for activity because fatty acids are bound in thioester linkage to the sulfhydryl of the prosthetic group.

It is found in the cytoplasm. The protein operates within lipid metabolism; fatty acid biosynthesis. Its function is as follows. Carrier of the growing fatty acid chain in fatty acid biosynthesis. The protein is Acyl carrier protein of Clostridium acetobutylicum (strain ATCC 824 / DSM 792 / JCM 1419 / IAM 19013 / LMG 5710 / NBRC 13948 / NRRL B-527 / VKM B-1787 / 2291 / W).